A 340-amino-acid polypeptide reads, in one-letter code: Dihydroorotate dehydrogenase (quinone) (340 aa).

FMN-binding positions include 62 to 66 and threonine 86; that span reads AGMDK. Residue lysine 66 participates in substrate binding. Residue 111 to 115 coordinates substrate; it reads NRMGF. Positions 139 and 172 each coordinate FMN. Asparagine 172 lines the substrate pocket. The active-site Nucleophile is the serine 175. Residue asparagine 177 coordinates substrate. Lysine 217 and threonine 245 together coordinate FMN. 246 to 247 serves as a coordination point for substrate; the sequence is NT. Residues glycine 268, glycine 297, and 318–319 contribute to the FMN site; that span reads YS.

Belongs to the dihydroorotate dehydrogenase family. Type 2 subfamily. In terms of assembly, monomer. Requires FMN as cofactor.

The protein resides in the cell membrane. The enzyme catalyses (S)-dihydroorotate + a quinone = orotate + a quinol. It functions in the pathway pyrimidine metabolism; UMP biosynthesis via de novo pathway; orotate from (S)-dihydroorotate (quinone route): step 1/1. Its function is as follows. Catalyzes the conversion of dihydroorotate to orotate with quinone as electron acceptor. This Shewanella woodyi (strain ATCC 51908 / MS32) protein is Dihydroorotate dehydrogenase (quinone).